Consider the following 81-residue polypeptide: Trefoil factor 3 (81 aa).

A signal peptide spans 1-22; it reads METRALWLMLLVVLVAGSSGIA. In terms of domain architecture, P-type spans 31 to 74; it reads SQCMVPANVRVDCGYPSVTSEQCNNRGCCFDSSIPNVPWCFKPL. 3 disulfides stabilise this stretch: C33–C59, C43–C58, and C53–C70.

Monomer. Homodimer; disulfide-linked. In terms of tissue distribution, expressed in goblet cells of the intestines and colon (at protein level). Expressed abundantly in goblet cells of intestine and colon, and at low levels in stomach. No expression in brain, lung, spleen, kidney, uterus, pancreas, liver, heart or thymus.

The protein localises to the secreted. It localises to the extracellular space. It is found in the extracellular matrix. Its subcellular location is the cytoplasm. Functionally, involved in the maintenance and repair of the intestinal mucosa. Promotes the mobility of epithelial cells in healing processes (motogen). This chain is Trefoil factor 3 (Tff3), found in Mus musculus (Mouse).